Reading from the N-terminus, the 79-residue chain is Short neurotoxin 8 (79 aa).

The signal sequence occupies residues 1–21; sequence MKTLLLTLVMVTIMCLDLGYT. Disulfide bonds link cysteine 24–cysteine 41, cysteine 34–cysteine 59, cysteine 63–cysteine 71, and cysteine 72–cysteine 77.

Belongs to the three-finger toxin family. Short-chain subfamily. Type III alpha-neurotoxin sub-subfamily. As to expression, expressed by the venom gland.

It localises to the secreted. Binds with high affinity to muscle nicotinic acetylcholine receptor (nAChR) and hinders acetylcholine binding to the receptor, thereby impairing neuromuscular transmission. Causes muscle paralysis, spasms and increased respiration. The polypeptide is Short neurotoxin 8 (Pseudonaja textilis (Eastern brown snake)).